Here is a 61-residue protein sequence, read N- to C-terminus: Large ribosomal subunit protein eL24 (61 aa).

Residues cysteine 7, cysteine 10, cysteine 33, and cysteine 37 each coordinate Zn(2+). The segment at 7–37 (CSFCGHEIPPGTGLMYVRNDGTILWFCSSKC) adopts a C4-type zinc-finger fold.

This sequence belongs to the eukaryotic ribosomal protein eL24 family. As to quaternary structure, part of the 50S ribosomal subunit. Forms a cluster with proteins L3 and L14. Zn(2+) serves as cofactor.

In terms of biological role, binds to the 23S rRNA. The polypeptide is Large ribosomal subunit protein eL24 (Saccharolobus islandicus (strain Y.N.15.51 / Yellowstone #2) (Sulfolobus islandicus)).